The following is a 64-amino-acid chain: Large ribosomal subunit protein bL35 (64 aa).

The disordered stretch occupies residues 20–42; it reads GRVKREKMYGSHNLEKKNRKRTR. The segment covering 25-35 has biased composition (basic and acidic residues); the sequence is EKMYGSHNLEK.

The protein belongs to the bacterial ribosomal protein bL35 family.

This is Large ribosomal subunit protein bL35 from Chlorobium phaeobacteroides (strain BS1).